Here is a 251-residue protein sequence, read N- to C-terminus: Triosephosphate isomerase (251 aa).

Substrate is bound at residue 9 to 11; it reads NWK. The active-site Electrophile is histidine 95. Glutamate 167 functions as the Proton acceptor in the catalytic mechanism. Residues glycine 173, serine 212, and 233 to 234 contribute to the substrate site; that span reads GG.

Belongs to the triosephosphate isomerase family. Homodimer.

It localises to the cytoplasm. The catalysed reaction is D-glyceraldehyde 3-phosphate = dihydroxyacetone phosphate. The protein operates within carbohydrate biosynthesis; gluconeogenesis. It functions in the pathway carbohydrate degradation; glycolysis; D-glyceraldehyde 3-phosphate from glycerone phosphate: step 1/1. Involved in the gluconeogenesis. Catalyzes stereospecifically the conversion of dihydroxyacetone phosphate (DHAP) to D-glyceraldehyde-3-phosphate (G3P). In Pseudomonas syringae pv. syringae (strain B728a), this protein is Triosephosphate isomerase.